Here is a 313-residue protein sequence, read N- to C-terminus: Pantothenate synthetase (313 aa).

Residue 43–50 coordinates ATP; that stretch reads MGALHEGH. His-50 serves as the catalytic Proton donor. Gln-75 is a binding site for (R)-pantoate. Residue Gln-75 coordinates beta-alanine. ATP is bound at residue 161–164; it reads GEKD. Position 167 (Gln-167) interacts with (R)-pantoate. ATP is bound by residues Val-190 and 198–201; that span reads LSSR.

Belongs to the pantothenate synthetase family. In terms of assembly, homodimer.

It localises to the cytoplasm. The enzyme catalyses (R)-pantoate + beta-alanine + ATP = (R)-pantothenate + AMP + diphosphate + H(+). Its pathway is cofactor biosynthesis; (R)-pantothenate biosynthesis; (R)-pantothenate from (R)-pantoate and beta-alanine: step 1/1. Functionally, catalyzes the condensation of pantoate with beta-alanine in an ATP-dependent reaction via a pantoyl-adenylate intermediate. This Mycobacterium sp. (strain KMS) protein is Pantothenate synthetase.